Reading from the N-terminus, the 486-residue chain is uncharacterized protein (486 aa).

A helical membrane pass occupies residues 18–38; that stretch reads TLLQLFVFTVICVFVLSGLAI. Residues 62–79 show a composition bias toward basic and acidic residues; sequence DRQKQMEKQQDSGEKRSF. Disordered stretches follow at residues 62-82 and 117-147; these read DRQKQMEKQQDSGEKRSFEST and IESSSSSDSSSSSSSSNAKNSQGGGQGGPQM. A compositionally biased stretch (low complexity) spans 119-132; sequence SSSSSDSSSSSSSS. 3 consecutive transmembrane segments (helical) span residues 324-344, 365-385, and 451-471; these read VVYLVSVAGAVILGLIVMMSI, IGQFLTEILIVAVIAIGLASV, and MLILGGIGILIAIIATLLPSI.

The protein belongs to the ABC-4 integral membrane protein family.

Its subcellular location is the cell membrane. This is an uncharacterized protein from Bacillus subtilis (strain 168).